The following is a 116-amino-acid chain: Large ribosomal subunit protein bL19 (116 aa).

It belongs to the bacterial ribosomal protein bL19 family.

This protein is located at the 30S-50S ribosomal subunit interface and may play a role in the structure and function of the aminoacyl-tRNA binding site. In Flavobacterium psychrophilum (strain ATCC 49511 / DSM 21280 / CIP 103535 / JIP02/86), this protein is Large ribosomal subunit protein bL19.